A 262-amino-acid chain; its full sequence is Snake venom serine proteinase 1 (262 aa).

The first 18 residues, 1–18 (MVLIRVLANLLILQLSYA), serve as a signal peptide directing secretion. Positions 19–24 (QKSSEL) are excised as a propeptide. The Peptidase S1 domain occupies 25-253 (VIGGDECNIN…HLDWIQSIIA (229 aa)). Cystine bridges form between Cys-31-Cys-165, Cys-52-Cys-68, Cys-144-Cys-214, Cys-176-Cys-193, and Cys-204-Cys-229. The active-site Charge relay system is His-67. Asn-105 carries an N-linked (GlcNAc...) asparagine glycan. Asp-112 functions as the Charge relay system in the catalytic mechanism. Ser-208 acts as the Charge relay system in catalysis.

It belongs to the peptidase S1 family. Snake venom subfamily. In terms of assembly, monomer. Expressed by the venom gland.

It localises to the secreted. In terms of biological role, snake venom serine protease that may act in the hemostasis system of the prey. This Crotalus adamanteus (Eastern diamondback rattlesnake) protein is Snake venom serine proteinase 1.